Reading from the N-terminus, the 219-residue chain is Large ribosomal subunit protein uL3 (219 aa).

Disordered regions lie at residues 62–81 and 136–156; these read DSRS…KKAG and QARG…SVGM.

It belongs to the universal ribosomal protein uL3 family. In terms of assembly, part of the 50S ribosomal subunit. Forms a cluster with proteins L14 and L19.

Its function is as follows. One of the primary rRNA binding proteins, it binds directly near the 3'-end of the 23S rRNA, where it nucleates assembly of the 50S subunit. In Staphylococcus saprophyticus subsp. saprophyticus (strain ATCC 15305 / DSM 20229 / NCIMB 8711 / NCTC 7292 / S-41), this protein is Large ribosomal subunit protein uL3.